The chain runs to 1877 residues: Protein TIC 214 (1877 aa).

A run of 6 helical transmembrane segments spans residues 18 to 38 (IINS…FSVG), 64 to 84 (FITG…HLAL), 87 to 107 (PHTI…WKNH), 124 to 144 (LSIQ…HFIL), 172 to 192 (VGWL…LFWI), and 221 to 241 (IFRI…PSPI). Disordered regions lie at residues 246-313 (LKET…GKEK), 644-695 (DDFE…NSDR), and 774-795 (PEFK…QKKE). Acidic residues-rich tracts occupy residues 251–268 (ETEE…EIET), 281–304 (GSTE…DETE), and 645–659 (DFEE…ESTE). Positions 685-695 (TSTKDTTNSDR) are enriched in basic and acidic residues.

The protein belongs to the TIC214 family. Part of the Tic complex.

The protein localises to the plastid. It localises to the chloroplast inner membrane. In terms of biological role, involved in protein precursor import into chloroplasts. May be part of an intermediate translocation complex acting as a protein-conducting channel at the inner envelope. The chain is Protein TIC 214 from Chloranthus spicatus (Chulantree).